A 61-amino-acid polypeptide reads, in one-letter code: Defensin BmKDfsin2 (61 aa).

The first 24 residues, 1 to 24 (METIVLLFLLALVFCTLEMGMVEA), serve as a signal peptide directing secretion. Cystine bridges form between Cys-28–Cys-49, Cys-35–Cys-57, and Cys-39–Cys-59.

Belongs to the invertebrate defensin family. Type 2 subfamily. As to expression, highly expressed in non-venom gland (hemolymph) and moderately expressed in venom gland.

It localises to the secreted. In terms of biological role, antibacterial peptide active against Gram-positive bacteria, but not on Gram-negative bacteria. Also has weak blocking activity on Kv1.1/KCNA1, Kv1.2/KCNA2, Kv1.3/KCNA3, KCa3.1/KCNN4/IK, KCa2.3/KCNN3/SK3 and Kv11.1/KCNH2/ERG1 channels (tested at 1 uM). It inhibits potassium channel current by interacting with the pore region. This is Defensin BmKDfsin2 from Olivierus martensii (Manchurian scorpion).